The primary structure comprises 95 residues: uncharacterized protein (95 aa).

The next 3 membrane-spanning stretches (helical) occupy residues 3–23 (YTVL…GFSF), 35–55 (ILFL…MMLT), and 63–83 (MLGV…VMII).

Its subcellular location is the cell membrane. This is an uncharacterized protein from Mycoplasma pneumoniae (strain ATCC 29342 / M129 / Subtype 1) (Mycoplasmoides pneumoniae).